Reading from the N-terminus, the 117-residue chain is Cuticle protein CP1246 (117 aa).

4 consecutive repeat copies span residues 1–17 (NYGE…LVQF), 26–43 (AEIG…HVQF), 67–84 (QSYG…NRQF), and 93–110 (VLVG…NVQF).

In terms of tissue distribution, calcified shell.

In Cancer pagurus (Rock crab), this protein is Cuticle protein CP1246.